Reading from the N-terminus, the 207-residue chain is BON1-associated protein 2 (207 aa).

In terms of domain architecture, C2 spans 1 to 112; it reads MSYSTFKRSL…GFAPQGHLNF (112 aa).

Interacts with BON1, BON2 and BON3. In terms of tissue distribution, expressed in roots, leaves, stems and flowers.

It is found in the membrane. Functionally, negative regulator of cell death and defense responses. Exhibits calcium-dependent phospholipid binding properties. This Arabidopsis thaliana (Mouse-ear cress) protein is BON1-associated protein 2 (BAP2).